A 130-amino-acid polypeptide reads, in one-letter code: MKEMINVVAVGTGGFVGAASRYFISTLVNKLNTSGFPIATLIINILGSFLIGLLTQLLMSLCPDNKKLNLFLTTGILGGFTTFSTFSLETVNLFQGGKAVFGVVNIVLSIAFCLTGVVLGKMLAKTIASM.

4 helical membrane-spanning segments follow: residues 4-24, 35-55, 68-88, and 99-119; these read MINVVAVGTGGFVGAASRYFI, GFPIATLIINILGSFLIGLLT, LNLFLTTGILGGFTTFSTFSL, and AVFGVVNIVLSIAFCLTGVVL. Na(+) contacts are provided by Gly-78 and Thr-81.

The protein belongs to the fluoride channel Fluc/FEX (TC 1.A.43) family.

The protein localises to the cell membrane. It catalyses the reaction fluoride(in) = fluoride(out). With respect to regulation, na(+) is not transported, but it plays an essential structural role and its presence is essential for fluoride channel function. Functionally, fluoride-specific ion channel. Important for reducing fluoride concentration in the cell, thus reducing its toxicity. The sequence is that of Fluoride-specific ion channel FluC from Ruminiclostridium cellulolyticum (strain ATCC 35319 / DSM 5812 / JCM 6584 / H10) (Clostridium cellulolyticum).